The sequence spans 273 residues: Dermonecrotic toxin LsaSicTox-alphaIB1bi (273 aa).

H5 is an active-site residue. The Mg(2+) site is built by E25 and D27. Catalysis depends on H41, which acts as the Nucleophile. Cystine bridges form between C45-C51 and C47-C190. A Mg(2+)-binding site is contributed by D85.

It belongs to the arthropod phospholipase D family. Class II subfamily. The cofactor is Mg(2+). Expressed by the venom gland.

It localises to the secreted. The enzyme catalyses an N-(acyl)-sphingosylphosphocholine = an N-(acyl)-sphingosyl-1,3-cyclic phosphate + choline. It carries out the reaction an N-(acyl)-sphingosylphosphoethanolamine = an N-(acyl)-sphingosyl-1,3-cyclic phosphate + ethanolamine. It catalyses the reaction a 1-acyl-sn-glycero-3-phosphocholine = a 1-acyl-sn-glycero-2,3-cyclic phosphate + choline. The catalysed reaction is a 1-acyl-sn-glycero-3-phosphoethanolamine = a 1-acyl-sn-glycero-2,3-cyclic phosphate + ethanolamine. Its function is as follows. Dermonecrotic toxins cleave the phosphodiester linkage between the phosphate and headgroup of certain phospholipids (sphingolipid and lysolipid substrates), forming an alcohol (often choline) and a cyclic phosphate. This toxin acts on sphingomyelin (SM). It may also act on ceramide phosphoethanolamine (CPE), lysophosphatidylcholine (LPC) and lysophosphatidylethanolamine (LPE), but not on lysophosphatidylserine (LPS), and lysophosphatidylglycerol (LPG). It acts by transphosphatidylation, releasing exclusively cyclic phosphate products as second products. Induces dermonecrosis, hemolysis, increased vascular permeability, edema, inflammatory response, and platelet aggregation. In Loxosceles sabina (Tucson recluse spider), this protein is Dermonecrotic toxin LsaSicTox-alphaIB1bi.